Here is a 97-residue protein sequence, read N- to C-terminus: ESAT-6-like protein EsxS (97 aa).

This sequence belongs to the WXG100 family. CFP-10 subfamily. In terms of assembly, forms a tight complex with EsxR. Exists in heterodimeric and heterotetrameric forms.

The protein resides in the secreted. This is ESAT-6-like protein EsxS from Mycobacterium tuberculosis (strain ATCC 25618 / H37Rv).